The chain runs to 201 residues: Iron-sulfur flavoprotein AF_1896 (201 aa).

Residues C46, C49, C52, and C57 each coordinate [4Fe-4S] cluster.

This sequence belongs to the SsuE family. Isf subfamily. As to quaternary structure, homodimer. The cofactor is FMN. [4Fe-4S] cluster is required as a cofactor.

Its function is as follows. Redox-active protein probably involved in electron transport. This is Iron-sulfur flavoprotein AF_1896 from Archaeoglobus fulgidus (strain ATCC 49558 / DSM 4304 / JCM 9628 / NBRC 100126 / VC-16).